The chain runs to 330 residues: Anthranilate phosphoribosyltransferase (330 aa).

Residues Gly-79, Gly-82 to Asp-83, Thr-87, Asn-89 to Thr-92, Lys-107 to Ser-115, and Ser-119 contribute to the 5-phospho-alpha-D-ribose 1-diphosphate site. An anthranilate-binding site is contributed by Gly-79. Ser-91 contributes to the Mg(2+) binding site. Asn-110 is a binding site for anthranilate. An anthranilate-binding site is contributed by Arg-165. Mg(2+) contacts are provided by Asp-223 and Glu-224.

It belongs to the anthranilate phosphoribosyltransferase family. As to quaternary structure, homodimer. Mg(2+) is required as a cofactor.

The enzyme catalyses N-(5-phospho-beta-D-ribosyl)anthranilate + diphosphate = 5-phospho-alpha-D-ribose 1-diphosphate + anthranilate. It functions in the pathway amino-acid biosynthesis; L-tryptophan biosynthesis; L-tryptophan from chorismate: step 2/5. Functionally, catalyzes the transfer of the phosphoribosyl group of 5-phosphorylribose-1-pyrophosphate (PRPP) to anthranilate to yield N-(5'-phosphoribosyl)-anthranilate (PRA). This chain is Anthranilate phosphoribosyltransferase, found in Flavobacterium johnsoniae (strain ATCC 17061 / DSM 2064 / JCM 8514 / BCRC 14874 / CCUG 350202 / NBRC 14942 / NCIMB 11054 / UW101) (Cytophaga johnsonae).